The following is a 149-amino-acid chain: Arginine repressor (149 aa).

It belongs to the ArgR family.

The protein resides in the cytoplasm. The protein operates within amino-acid biosynthesis; L-arginine biosynthesis [regulation]. Regulates arginine biosynthesis genes. The sequence is that of Arginine repressor from Exiguobacterium sibiricum (strain DSM 17290 / CCUG 55495 / CIP 109462 / JCM 13490 / 255-15).